Consider the following 259-residue polypeptide: Phosphatidylglycerol--prolipoprotein diacylglyceryl transferase (259 aa).

4 helical membrane passes run 9–29 (IGPF…VLAV), 47–67 (IDFI…YYVI), 83–103 (IWNG…VLFI), and 109–129 (VLNP…AQAI). R131 provides a ligand contact to a 1,2-diacyl-sn-glycero-3-phospho-(1'-sn-glycerol). The next 3 helical transmembrane spans lie at 167–187 (MPTF…ICYL), 194–214 (LLEG…RFVI), and 227–247 (LRVS…FVIL).

It belongs to the Lgt family.

The protein resides in the cell membrane. The catalysed reaction is L-cysteinyl-[prolipoprotein] + a 1,2-diacyl-sn-glycero-3-phospho-(1'-sn-glycerol) = an S-1,2-diacyl-sn-glyceryl-L-cysteinyl-[prolipoprotein] + sn-glycerol 1-phosphate + H(+). It functions in the pathway protein modification; lipoprotein biosynthesis (diacylglyceryl transfer). Catalyzes the transfer of the diacylglyceryl group from phosphatidylglycerol to the sulfhydryl group of the N-terminal cysteine of a prolipoprotein, the first step in the formation of mature lipoproteins. The protein is Phosphatidylglycerol--prolipoprotein diacylglyceryl transferase of Streptococcus uberis (strain ATCC BAA-854 / 0140J).